The sequence spans 580 residues: Glyco-Gag protein (580 aa).

The Cytoplasmic segment spans residues 1 to 51 (MSGASSGTAIGAHLFGVSPEYRVLIGDGGAGPSKSLSEVSFSVWYRSRAAR). Residues 52–72 (LVILCLVASFLVPCLTFLIAE) traverse the membrane as a helical segment. Topologically, residues 73–580 (AVMGQTVTTP…ANSTLLNLED (508 aa)) are extracellular. N-linked (GlcNAc...) asparagine; by host glycosylation is present at Asn134. 3 disordered regions span residues 171 to 282 (VRPF…NRPQ), 491 to 514 (ETPEEREERLWQRQEERDKKRHKE), and 560 to 580 (RDCPKRPRKKPANSTLLNLED). Pro residues predominate over residues 174–193 (FLPPPKPPTPLPQPLSPQPS). The span at 194–203 (APLTSSLYPV) shows a compositional bias: low complexity. 2 stretches are compositionally biased toward pro residues: residues 204 to 220 (VPKPDPPKPPVLPPDPS) and 230 to 245 (EPPPYPGGHGPPPSGP). Basic and acidic residues predominate over residues 491 to 508 (ETPEEREERLWQRQEERD). Residues 571 to 580 (ANSTLLNLED) are compositionally biased toward polar residues. The N-linked (GlcNAc...) asparagine; by host glycan is linked to Asn572.

Glycosylated by host. In terms of processing, cleaved by host near the middle of the molecule, releasing the c-terminal half containing capsid and nucleoprotein domains op GAG.

It localises to the host cell membrane. Functionally, plays a role in viral particle release. Presumably acts by facilitating the fission of the virion bud at the cell surface. This Feline leukemia virus protein is Glyco-Gag protein.